A 225-amino-acid polypeptide reads, in one-letter code: NAD(P)H-quinone oxidoreductase subunit K, chloroplastic (225 aa).

[4Fe-4S] cluster is bound by residues Cys43, Cys44, Cys108, and Cys139.

Belongs to the complex I 20 kDa subunit family. In terms of assembly, NDH is composed of at least 16 different subunits, 5 of which are encoded in the nucleus. It depends on [4Fe-4S] cluster as a cofactor.

It localises to the plastid. It is found in the chloroplast thylakoid membrane. The enzyme catalyses a plastoquinone + NADH + (n+1) H(+)(in) = a plastoquinol + NAD(+) + n H(+)(out). It catalyses the reaction a plastoquinone + NADPH + (n+1) H(+)(in) = a plastoquinol + NADP(+) + n H(+)(out). Functionally, NDH shuttles electrons from NAD(P)H:plastoquinone, via FMN and iron-sulfur (Fe-S) centers, to quinones in the photosynthetic chain and possibly in a chloroplast respiratory chain. The immediate electron acceptor for the enzyme in this species is believed to be plastoquinone. Couples the redox reaction to proton translocation, and thus conserves the redox energy in a proton gradient. This is NAD(P)H-quinone oxidoreductase subunit K, chloroplastic from Populus alba (White poplar).